Here is a 477-residue protein sequence, read N- to C-terminus: Glycogen synthase (477 aa).

Lys-15 contacts ADP-alpha-D-glucose.

The protein belongs to the glycosyltransferase 1 family. Bacterial/plant glycogen synthase subfamily.

It catalyses the reaction [(1-&gt;4)-alpha-D-glucosyl](n) + ADP-alpha-D-glucose = [(1-&gt;4)-alpha-D-glucosyl](n+1) + ADP + H(+). It participates in glycan biosynthesis; glycogen biosynthesis. In terms of biological role, synthesizes alpha-1,4-glucan chains using ADP-glucose. This Klebsiella pneumoniae subsp. pneumoniae (strain ATCC 700721 / MGH 78578) protein is Glycogen synthase.